A 195-amino-acid chain; its full sequence is CASP-like protein 1B1 (195 aa).

The Cytoplasmic portion of the chain corresponds to 1-25 (MDLEKGKKPSEQAAACRIMQVKDKL). Residues 26–46 (ITLQPVVRACVFLATAVAAVI) form a helical membrane-spanning segment. Topologically, residues 47–78 (MGLNKQSYTTVVAIVGTRPVTQTFTAKFKDTP) are extracellular. A helical transmembrane segment spans residues 79–99 (AFVFFVIANAIASGYNLMVLV). Residues 100-114 (TRRILQRRAQSLSVH) lie on the Cytoplasmic side of the membrane. Residues 115–135 (LLDMVILTLLATGSATAASMA) traverse the membrane as a helical segment. The Extracellular segment spans residues 136–160 (QLGKNGNLHARWNPICDKFGSFCNH). The chain crosses the membrane as a helical span at residues 161 to 181 (GGIALMSSFIGVALMLALNLL). At 182-195 (SAAANSPRSNVTGQ) the chain is on the cytoplasmic side.

It belongs to the Casparian strip membrane proteins (CASP) family. In terms of assembly, homodimer and heterodimers.

The protein localises to the cell membrane. The polypeptide is CASP-like protein 1B1 (Oryza sativa subsp. indica (Rice)).